The chain runs to 488 residues: Arginine biosynthesis bifunctional protein ArgJ, mitochondrial (488 aa).

Substrate is bound by residues T227, K250, T261, E340, N483, and S488. T261 acts as the Nucleophile in catalysis.

This sequence belongs to the ArgJ family. In terms of assembly, heterodimer of an alpha and a beta chain. The alpha and beta chains are autoproteolytically processed from a single precursor protein within the mitochondrion.

It is found in the mitochondrion matrix. It carries out the reaction N(2)-acetyl-L-ornithine + L-glutamate = N-acetyl-L-glutamate + L-ornithine. The enzyme catalyses L-glutamate + acetyl-CoA = N-acetyl-L-glutamate + CoA + H(+). It participates in amino-acid biosynthesis; L-arginine biosynthesis; L-ornithine and N-acetyl-L-glutamate from L-glutamate and N(2)-acetyl-L-ornithine (cyclic): step 1/1. Its pathway is amino-acid biosynthesis; L-arginine biosynthesis; N(2)-acetyl-L-ornithine from L-glutamate: step 1/4. In terms of biological role, catalyzes two activities which are involved in the cyclic version of arginine biosynthesis: the synthesis of acetylglutamate from glutamate and acetyl-CoA, and of ornithine by transacetylation between acetylornithine and glutamate. The polypeptide is Arginine biosynthesis bifunctional protein ArgJ, mitochondrial (Thalassiosira pseudonana (Marine diatom)).